The sequence spans 361 residues: 1D-myo-inositol 2-acetamido-2-deoxy-alpha-D-glucopyranoside deacetylase (361 aa).

Over residues 1 to 12 the composition is skewed to pro residues; it reads MTTTPQPPPQPD. A disordered region spans residues 1-27; sequence MTTTPQPPPQPDETPEGAAGAATAGRD. The segment covering 16–25 has biased composition (low complexity); it reads EGAAGAATAG. Residues His66, Asp69, and His207 each coordinate Zn(2+).

The protein belongs to the MshB deacetylase family. Zn(2+) is required as a cofactor.

The catalysed reaction is 1D-myo-inositol 2-acetamido-2-deoxy-alpha-D-glucopyranoside + H2O = 1D-myo-inositol 2-amino-2-deoxy-alpha-D-glucopyranoside + acetate. Its function is as follows. Catalyzes the deacetylation of 1D-myo-inositol 2-acetamido-2-deoxy-alpha-D-glucopyranoside (GlcNAc-Ins) in the mycothiol biosynthesis pathway. In Kineococcus radiotolerans (strain ATCC BAA-149 / DSM 14245 / SRS30216), this protein is 1D-myo-inositol 2-acetamido-2-deoxy-alpha-D-glucopyranoside deacetylase.